A 322-amino-acid chain; its full sequence is Pantothenate kinase (322 aa).

ATP is bound at residue 100–107; the sequence is GSVAVGKS.

It belongs to the prokaryotic pantothenate kinase family.

The protein resides in the cytoplasm. It catalyses the reaction (R)-pantothenate + ATP = (R)-4'-phosphopantothenate + ADP + H(+). Its pathway is cofactor biosynthesis; coenzyme A biosynthesis; CoA from (R)-pantothenate: step 1/5. This Brucella abortus (strain 2308) protein is Pantothenate kinase.